A 36-amino-acid polypeptide reads, in one-letter code: Photosystem I reaction center subunit VIII (36 aa).

A helical transmembrane segment spans residues 8 to 28; the sequence is SLFVPLVGLVFPAIAMASLFL.

The protein belongs to the PsaI family.

It is found in the plastid. The protein localises to the chloroplast thylakoid membrane. May help in the organization of the PsaL subunit. The chain is Photosystem I reaction center subunit VIII from Brassica oleracea (Wild cabbage).